We begin with the raw amino-acid sequence, 272 residues long: Orotidine 5'-phosphate decarboxylase (272 aa).

K93 functions as the Proton donor in the catalytic mechanism.

The protein belongs to the OMP decarboxylase family. Type 2 subfamily.

The catalysed reaction is orotidine 5'-phosphate + H(+) = UMP + CO2. It participates in pyrimidine metabolism; UMP biosynthesis via de novo pathway; UMP from orotate: step 2/2. This chain is Orotidine 5'-phosphate decarboxylase, found in Roseiflexus castenholzii (strain DSM 13941 / HLO8).